A 254-amino-acid polypeptide reads, in one-letter code: Glycerol operon regulatory protein (254 aa).

Positions 5–67 (IQSLERAAAM…PASGRYQLGA (63 aa)) constitute an HTH iclR-type domain. The segment at residues 27 to 46 (LSDIASTLGLAKGTAHGILR) is a DNA-binding region (H-T-H motif). Residues 82–251 (LRARALVWTD…AAAVSRDLGA (170 aa)) form the IclR-ED domain.

In terms of biological role, may be an activator protein for the gylABX operon. This is Glycerol operon regulatory protein (gylR) from Streptomyces griseus.